The following is a 988-amino-acid chain: UvrABC system protein A (988 aa).

Position 33-40 (33-40) interacts with ATP; sequence GLSGSGKS. The segment at 255 to 282 adopts a C4-type zinc-finger fold; it reads CPVCDYSLPELEPRLFSFNAPVGACPSC. 2 ABC transporter domains span residues 312-589 and 609-938; these read WDRR…PRSL and PNPK…QFLA. 642-649 is a binding site for ATP; it reads GVSGSGKS. Residues 741–767 form a C4-type zinc finger; the sequence is CEACQGDGMIKVEMHFLPDVYVPCDVC. The disordered stretch occupies residues 948 to 988; the sequence is ETRPAAMANKPDARPPRKVKPEKVAKATKTATKKTAKKKAS. Residues 958 to 972 are compositionally biased toward basic and acidic residues; it reads PDARPPRKVKPEKVA. Residues 978 to 988 are compositionally biased toward basic residues; it reads ATKKTAKKKAS.

The protein belongs to the ABC transporter superfamily. UvrA family. Forms a heterotetramer with UvrB during the search for lesions.

Its subcellular location is the cytoplasm. Its function is as follows. The UvrABC repair system catalyzes the recognition and processing of DNA lesions. UvrA is an ATPase and a DNA-binding protein. A damage recognition complex composed of 2 UvrA and 2 UvrB subunits scans DNA for abnormalities. When the presence of a lesion has been verified by UvrB, the UvrA molecules dissociate. The protein is UvrABC system protein A of Xanthomonas campestris pv. campestris (strain ATCC 33913 / DSM 3586 / NCPPB 528 / LMG 568 / P 25).